The sequence spans 317 residues: 1D-myo-inositol 2-acetamido-2-deoxy-alpha-D-glucopyranoside deacetylase (317 aa).

Residues His15, Asp18, and His154 each coordinate Zn(2+). The disordered stretch occupies residues 289–317 (QDLDNRNPNSQPPADQAREDHLLTGLGFA).

The protein belongs to the MshB deacetylase family. It depends on Zn(2+) as a cofactor.

It carries out the reaction 1D-myo-inositol 2-acetamido-2-deoxy-alpha-D-glucopyranoside + H2O = 1D-myo-inositol 2-amino-2-deoxy-alpha-D-glucopyranoside + acetate. Its function is as follows. Catalyzes the deacetylation of 1D-myo-inositol 2-acetamido-2-deoxy-alpha-D-glucopyranoside (GlcNAc-Ins) in the mycothiol biosynthesis pathway. In Segniliparus rotundus (strain ATCC BAA-972 / CDC 1076 / CIP 108378 / DSM 44985 / JCM 13578), this protein is 1D-myo-inositol 2-acetamido-2-deoxy-alpha-D-glucopyranoside deacetylase.